The primary structure comprises 230 residues: Ureidoacrylate amidohydrolase RutB (230 aa).

D24 functions as the Proton acceptor in the catalytic mechanism. K133 is a catalytic residue. C166 serves as the catalytic Nucleophile.

Belongs to the isochorismatase family. RutB subfamily.

The enzyme catalyses (Z)-3-ureidoacrylate + H2O + H(+) = (Z)-3-aminoacrylate + NH4(+) + CO2. The catalysed reaction is (Z)-3-ureidoacrylate + H2O = (Z)-3-aminoacrylate + carbamate + H(+). It carries out the reaction (Z)-2-methylureidoacrylate + H2O + H(+) = (Z)-2-methylaminoacrylate + NH4(+) + CO2. Functionally, hydrolyzes ureidoacrylate to form aminoacrylate and carbamate. The carbamate hydrolyzes spontaneously, thereby releasing one of the nitrogen atoms of the pyrimidine ring as ammonia and one of its carbon atoms as CO2. The protein is Ureidoacrylate amidohydrolase RutB of Escherichia coli (strain B / BL21-DE3).